The primary structure comprises 921 residues: Probable glucan 1,3-alpha-glucosidase (921 aa).

Positions 1-20 are cleaved as a signal peptide; that stretch reads MRSLLFVLSLICFCSQTALS. The active-site Nucleophile is aspartate 512. Glutamate 515 is an active-site residue. Aspartate 588 functions as the Proton donor in the catalytic mechanism. Residues asparagine 689 and asparagine 804 are each glycosylated (N-linked (GlcNAc...) asparagine).

Belongs to the glycosyl hydrolase 31 family. Heterodimer of a catalytic alpha subunit (PSL5) and a beta subunit (PSL4). Expressed in roots, rosette leaves, leaf blades, mature stems, cauline leaves, flower buds, flowers and siliques.

The protein resides in the endoplasmic reticulum. It catalyses the reaction Hydrolysis of terminal (1-&gt;3)-alpha-D-glucosidic links in (1-&gt;3)-alpha-D-glucans.. Its pathway is glycan metabolism; N-glycan metabolism. Its function is as follows. Cleaves sequentially the 2 innermost alpha-1,3-linked glucose residues from the Glc(2)Man(9)GlcNAc(2) oligosaccharide precursor of immature glycoproteins. Essential for stable accumulation of the receptor EFR that determines the specific perception of bacterial elongation factor Tu (EF-Tu), a potent elicitor of the defense response to pathogen-associated molecular patterns (PAMPs). Required for sustained activation of EFR-mediated signaling, but not receptor FLS2-mediated signaling elicited by the bacterial flagellin flg22. The protein is Probable glucan 1,3-alpha-glucosidase (PSL5) of Arabidopsis thaliana (Mouse-ear cress).